The chain runs to 143 residues: Heat shock protein 16 (143 aa).

A sHSP domain is found at 30–143; the sequence is QIPGELSPSI…SQTKKQIAIK (114 aa).

It belongs to the small heat shock protein (HSP20) family.

The protein localises to the cytoplasm. Its subcellular location is the nucleus. This is Heat shock protein 16 (hsp16) from Schizosaccharomyces pombe (strain 972 / ATCC 24843) (Fission yeast).